The chain runs to 440 residues: Chorismate synthase 1, chloroplastic (440 aa).

The transit peptide at 1-54 (MASFVPTKQFVGASSSSDIGSSRLVSLQLPSKFSSSNFHLPSRPSQLKRLEIQA) directs the protein to the chloroplast. The tract at residues 100 to 147 (RRRPGQSRITTPRKETDTCKISSGTADGLTTGSPIKVEVPNTDQRGND) is disordered. The segment covering 118 to 132 (CKISSGTADGLTTGS) has biased composition (polar residues).

It belongs to the chorismate synthase family. As to quaternary structure, homotetramer. The cofactor is FMNH2. Predominantly expressed in flowers and roots and, to a lesser extent, in stems, leaves, and cotyledons.

The protein localises to the plastid. It localises to the chloroplast. The enzyme catalyses 5-O-(1-carboxyvinyl)-3-phosphoshikimate = chorismate + phosphate. It participates in metabolic intermediate biosynthesis; chorismate biosynthesis; chorismate from D-erythrose 4-phosphate and phosphoenolpyruvate: step 7/7. In terms of biological role, catalyzes the last common step of the biosynthesis of aromatic amino acids, produced via the shikimic acid pathway. The sequence is that of Chorismate synthase 1, chloroplastic (CS1) from Solanum lycopersicum (Tomato).